The chain runs to 205 residues: LexA repressor (205 aa).

Positions 28–48 (IRDIMKHFNFKSPRAAHKHLI) form a DNA-binding region, H-T-H motif. Active-site for autocatalytic cleavage activity residues include Ser125 and Lys163.

This sequence belongs to the peptidase S24 family. In terms of assembly, homodimer.

The enzyme catalyses Hydrolysis of Ala-|-Gly bond in repressor LexA.. Functionally, represses a number of genes involved in the response to DNA damage (SOS response), including recA and lexA. In the presence of single-stranded DNA, RecA interacts with LexA causing an autocatalytic cleavage which disrupts the DNA-binding part of LexA, leading to derepression of the SOS regulon and eventually DNA repair. This is LexA repressor from Petrotoga mobilis (strain DSM 10674 / SJ95).